The primary structure comprises 701 residues: Elongation factor G (701 aa).

The tr-type G domain maps to 8-291; it reads SRYRNIGIVA…AVIDFLPAPT (284 aa). GTP contacts are provided by residues 17-24, 89-93, and 143-146; these read AHVDAGKT, DTPGH, and NKMD.

Belongs to the TRAFAC class translation factor GTPase superfamily. Classic translation factor GTPase family. EF-G/EF-2 subfamily.

Its subcellular location is the cytoplasm. Functionally, catalyzes the GTP-dependent ribosomal translocation step during translation elongation. During this step, the ribosome changes from the pre-translocational (PRE) to the post-translocational (POST) state as the newly formed A-site-bound peptidyl-tRNA and P-site-bound deacylated tRNA move to the P and E sites, respectively. Catalyzes the coordinated movement of the two tRNA molecules, the mRNA and conformational changes in the ribosome. The sequence is that of Elongation factor G from Pseudomonas fluorescens (strain Pf0-1).